A 328-amino-acid polypeptide reads, in one-letter code: Protease HtpX homolog (328 aa).

2 helical membrane passes run 6-26 and 28-48; these read TAML…LIGG and SGMM…YWNS. Residue His130 participates in Zn(2+) binding. Glu131 is an active-site residue. His134 provides a ligand contact to Zn(2+). Helical transmembrane passes span 145–165 and 172–192; these read ITAT…FFGG and PLGA…AMLV. Glu201 contacts Zn(2+). The segment at 279 to 328 is disordered; the sequence is QYGGGTGPSVGTPTRSGSTGPAMTANPERKSRSVPNTGRGGSQPPKGPWS. Over residues 287 to 299 the composition is skewed to low complexity; sequence SVGTPTRSGSTGP.

Belongs to the peptidase M48B family. The cofactor is Zn(2+).

The protein localises to the cell inner membrane. This Rhizobium rhizogenes (strain K84 / ATCC BAA-868) (Agrobacterium radiobacter) protein is Protease HtpX homolog.